Here is an 81-residue protein sequence, read N- to C-terminus: ATP synthase subunit c, chloroplastic (81 aa).

2 consecutive transmembrane segments (helical) span residues 3–23 and 57–77; these read PLIS…ASIG and LAFM…LLFA.

This sequence belongs to the ATPase C chain family. F-type ATPases have 2 components, F(1) - the catalytic core - and F(0) - the membrane proton channel. F(1) has five subunits: alpha(3), beta(3), gamma(1), delta(1), epsilon(1). F(0) has four main subunits: a(1), b(1), b'(1) and c(10-14). The alpha and beta chains form an alternating ring which encloses part of the gamma chain. F(1) is attached to F(0) by a central stalk formed by the gamma and epsilon chains, while a peripheral stalk is formed by the delta, b and b' chains.

The protein resides in the plastid. The protein localises to the chloroplast thylakoid membrane. Its function is as follows. F(1)F(0) ATP synthase produces ATP from ADP in the presence of a proton or sodium gradient. F-type ATPases consist of two structural domains, F(1) containing the extramembraneous catalytic core and F(0) containing the membrane proton channel, linked together by a central stalk and a peripheral stalk. During catalysis, ATP synthesis in the catalytic domain of F(1) is coupled via a rotary mechanism of the central stalk subunits to proton translocation. In terms of biological role, key component of the F(0) channel; it plays a direct role in translocation across the membrane. A homomeric c-ring of between 10-14 subunits forms the central stalk rotor element with the F(1) delta and epsilon subunits. The sequence is that of ATP synthase subunit c, chloroplastic from Acorus calamus var. americanus (American sweet flag).